Reading from the N-terminus, the 126-residue chain is Aspartate 1-decarboxylase (126 aa).

The active-site Schiff-base intermediate with substrate; via pyruvic acid is Ser25. Residue Ser25 is modified to Pyruvic acid (Ser). Residue Thr57 participates in substrate binding. Tyr58 serves as the catalytic Proton donor. A substrate-binding site is contributed by 73–75; it reads GAA.

Belongs to the PanD family. As to quaternary structure, heterooctamer of four alpha and four beta subunits. It depends on pyruvate as a cofactor. In terms of processing, is synthesized initially as an inactive proenzyme, which is activated by self-cleavage at a specific serine bond to produce a beta-subunit with a hydroxyl group at its C-terminus and an alpha-subunit with a pyruvoyl group at its N-terminus.

The protein resides in the cytoplasm. The catalysed reaction is L-aspartate + H(+) = beta-alanine + CO2. It functions in the pathway cofactor biosynthesis; (R)-pantothenate biosynthesis; beta-alanine from L-aspartate: step 1/1. Catalyzes the pyruvoyl-dependent decarboxylation of aspartate to produce beta-alanine. In Alkalilimnicola ehrlichii (strain ATCC BAA-1101 / DSM 17681 / MLHE-1), this protein is Aspartate 1-decarboxylase.